Reading from the N-terminus, the 333-residue chain is Uroporphyrinogen decarboxylase (333 aa).

Substrate-binding positions include 21-25 (RQVGR), Asp-70, Tyr-139, Ser-194, and His-309.

This sequence belongs to the uroporphyrinogen decarboxylase family. In terms of assembly, homodimer.

Its subcellular location is the cytoplasm. It catalyses the reaction uroporphyrinogen III + 4 H(+) = coproporphyrinogen III + 4 CO2. It participates in porphyrin-containing compound metabolism; protoporphyrin-IX biosynthesis; coproporphyrinogen-III from 5-aminolevulinate: step 4/4. Functionally, catalyzes the decarboxylation of four acetate groups of uroporphyrinogen-III to yield coproporphyrinogen-III. This chain is Uroporphyrinogen decarboxylase, found in Chlamydia abortus (strain DSM 27085 / S26/3) (Chlamydophila abortus).